The primary structure comprises 282 residues: Acetyl-coenzyme A carboxylase carboxyl transferase subunit beta (282 aa).

The CoA carboxyltransferase N-terminal domain occupies 29-282; it reads LWRTCPKCQR…LMKYGGKQND (254 aa). Zn(2+) is bound by residues cysteine 33, cysteine 36, cysteine 51, and cysteine 54. A C4-type zinc finger spans residues 33–54; that stretch reads CPKCQRTLFAAQMDEYATCPGC.

The protein belongs to the AccD/PCCB family. Acetyl-CoA carboxylase is a heterohexamer composed of biotin carboxyl carrier protein (AccB), biotin carboxylase (AccC) and two subunits each of ACCase subunit alpha (AccA) and ACCase subunit beta (AccD). Requires Zn(2+) as cofactor.

It is found in the cytoplasm. It carries out the reaction N(6)-carboxybiotinyl-L-lysyl-[protein] + acetyl-CoA = N(6)-biotinyl-L-lysyl-[protein] + malonyl-CoA. Its pathway is lipid metabolism; malonyl-CoA biosynthesis; malonyl-CoA from acetyl-CoA: step 1/1. Its function is as follows. Component of the acetyl coenzyme A carboxylase (ACC) complex. Biotin carboxylase (BC) catalyzes the carboxylation of biotin on its carrier protein (BCCP) and then the CO(2) group is transferred by the transcarboxylase to acetyl-CoA to form malonyl-CoA. In Limosilactobacillus fermentum (strain NBRC 3956 / LMG 18251) (Lactobacillus fermentum), this protein is Acetyl-coenzyme A carboxylase carboxyl transferase subunit beta.